Here is a 392-residue protein sequence, read N- to C-terminus: GTPase Obg (392 aa).

The 159-residue stretch at 1–159 (MKFVDEATIL…RDLQLELMLL (159 aa)) folds into the Obg domain. The segment at 127 to 146 (NTRFKSSVNRTPRQKTMGTP) is disordered. Residues 129–143 (RFKSSVNRTPRQKTM) are compositionally biased toward polar residues. The region spanning 160–333 (ADVGMLGLPN…LCWDVMAFIK (174 aa)) is the OBG-type G domain. Residues 166–173 (GLPNAGKS), 191–195 (FTTLV), 213–216 (DIPG), 283–286 (NKVD), and 314–316 (SAA) each bind GTP. Residues Ser-173 and Thr-193 each coordinate Mg(2+). The interval 360 to 392 (QLEEAQPEVEEDDDWDDDWDEDDEEGVETIYQR) is disordered. Over residues 364 to 386 (AQPEVEEDDDWDDDWDEDDEEGV) the composition is skewed to acidic residues.

This sequence belongs to the TRAFAC class OBG-HflX-like GTPase superfamily. OBG GTPase family. As to quaternary structure, monomer. It depends on Mg(2+) as a cofactor.

The protein localises to the cytoplasm. An essential GTPase which binds GTP, GDP and possibly (p)ppGpp with moderate affinity, with high nucleotide exchange rates and a fairly low GTP hydrolysis rate. Plays a role in control of the cell cycle, stress response, ribosome biogenesis and in those bacteria that undergo differentiation, in morphogenesis control. The polypeptide is GTPase Obg (Erwinia tasmaniensis (strain DSM 17950 / CFBP 7177 / CIP 109463 / NCPPB 4357 / Et1/99)).